The sequence spans 242 residues: MKPSDGLEALQNLLGYRFGDEGLLHRALVHRSYLHENPHLDEKDNETLEFLGDAVLGLAISHFLLEQFPDYNEGELSRLRSAIVNERELTRIAVELNLGEYLLLGKGEEMTGGRRKASLLADSLEALLASIYLDGGLDAVLGVIKKLFDVYLRFEKREHVLKALDKDYKTQLQELTQARYKLTPVYVLDREEGPDHDKTFHMNVVLEGQVLAGGSGKSKKDAQQAAAEKALQIIAADSWSLD.

In terms of domain architecture, RNase III spans 7–136 (LEALQNLLGY…LLASIYLDGG (130 aa)). E49 provides a ligand contact to Mg(2+). Residue D53 is part of the active site. Residues D122 and E125 each contribute to the Mg(2+) site. E125 is an active-site residue. In terms of domain architecture, DRBM spans 167–236 (DYKTQLQELT…AEKALQIIAA (70 aa)).

Belongs to the ribonuclease III family. In terms of assembly, homodimer. Mg(2+) serves as cofactor.

It localises to the cytoplasm. The catalysed reaction is Endonucleolytic cleavage to 5'-phosphomonoester.. Functionally, digests double-stranded RNA. Involved in the processing of primary rRNA transcript to yield the immediate precursors to the large and small rRNAs (23S and 16S). Processes some mRNAs, and tRNAs when they are encoded in the rRNA operon. Processes pre-crRNA and tracrRNA of type II CRISPR loci if present in the organism. In Syntrophobacter fumaroxidans (strain DSM 10017 / MPOB), this protein is Ribonuclease 3.